The sequence spans 113 residues: uncharacterized protein (113 aa).

2 helical membrane passes run M1–W21 and I48–V68.

This sequence to M.tuberculosis Rv0039.

The protein resides in the cell membrane. This is an uncharacterized protein from Mycobacterium leprae (strain TN).